Consider the following 850-residue polypeptide: PH domain-containing protein YHR131C (850 aa).

Residues 194–306 form the PH domain; it reads RIHSDLVHRS…MYLSIGISVS (113 aa). Basic residues predominate over residues 324 to 338; that stretch reads RRRRRRRRRRRRHTH. Disordered stretches follow at residues 324–348, 406–428, 451–494, 583–659, and 793–850; these read RRRR…GSFS, SAAS…SGCS, SSRT…GVPV, EASI…TDDS, and TTKD…QITA. Positions 406-416 are enriched in low complexity; that stretch reads SAASGESSDNS. The span at 417–428 shows a compositional bias: polar residues; that stretch reads TLGSTRSLSGCS. A compositionally biased stretch (basic and acidic residues) spans 479-489; that stretch reads HHESSGGDHPE. Residues 605–619 are compositionally biased toward polar residues; sequence ESATDLSQSSRSLCL. Acidic residues-rich tracts occupy residues 626–658 and 799–850; these read INDD…DTDD and DHGE…QITA.

The protein resides in the cytoplasm. This chain is PH domain-containing protein YHR131C, found in Saccharomyces cerevisiae (strain ATCC 204508 / S288c) (Baker's yeast).